A 500-amino-acid polypeptide reads, in one-letter code: Probable cytosol aminopeptidase (500 aa).

Mn(2+)-binding residues include K269 and D274. K281 is an active-site residue. Mn(2+) is bound by residues D292, D351, and E353. Residue R355 is part of the active site.

This sequence belongs to the peptidase M17 family. Mn(2+) serves as cofactor.

Its subcellular location is the cytoplasm. It catalyses the reaction Release of an N-terminal amino acid, Xaa-|-Yaa-, in which Xaa is preferably Leu, but may be other amino acids including Pro although not Arg or Lys, and Yaa may be Pro. Amino acid amides and methyl esters are also readily hydrolyzed, but rates on arylamides are exceedingly low.. It carries out the reaction Release of an N-terminal amino acid, preferentially leucine, but not glutamic or aspartic acids.. Presumably involved in the processing and regular turnover of intracellular proteins. Catalyzes the removal of unsubstituted N-terminal amino acids from various peptides. This is Probable cytosol aminopeptidase from Acidithiobacillus ferrooxidans (strain ATCC 23270 / DSM 14882 / CIP 104768 / NCIMB 8455) (Ferrobacillus ferrooxidans (strain ATCC 23270)).